A 343-amino-acid chain; its full sequence is Dihydroorotate dehydrogenase (quinone) (343 aa).

Residues 61-65 (AGLDK) and threonine 85 each bind FMN. Residue lysine 65 coordinates substrate. A substrate-binding site is contributed by 110-114 (NRMGF). Residues asparagine 138 and asparagine 171 each coordinate FMN. A substrate-binding site is contributed by asparagine 171. Serine 174 functions as the Nucleophile in the catalytic mechanism. Residue asparagine 176 participates in substrate binding. 2 residues coordinate FMN: lysine 216 and threonine 244. A substrate-binding site is contributed by 245-246 (NT). Residues glycine 267, glycine 296, and 317-318 (YS) contribute to the FMN site.

Belongs to the dihydroorotate dehydrogenase family. Type 2 subfamily. As to quaternary structure, monomer. FMN serves as cofactor.

Its subcellular location is the cell membrane. It catalyses the reaction (S)-dihydroorotate + a quinone = orotate + a quinol. The protein operates within pyrimidine metabolism; UMP biosynthesis via de novo pathway; orotate from (S)-dihydroorotate (quinone route): step 1/1. Its function is as follows. Catalyzes the conversion of dihydroorotate to orotate with quinone as electron acceptor. The sequence is that of Dihydroorotate dehydrogenase (quinone) from Pseudomonas syringae pv. syringae (strain B728a).